The chain runs to 237 residues: tRNA (guanine-N(7)-)-methyltransferase (237 aa).

The S-adenosyl-L-methionine site is built by Glu-67, Glu-92, Asp-119, and Asp-142. Asp-142 is a catalytic residue. Substrate is bound by residues Lys-146, Asp-178, and Thr-215 to Glu-218.

The protein belongs to the class I-like SAM-binding methyltransferase superfamily. TrmB family.

It catalyses the reaction guanosine(46) in tRNA + S-adenosyl-L-methionine = N(7)-methylguanosine(46) in tRNA + S-adenosyl-L-homocysteine. The protein operates within tRNA modification; N(7)-methylguanine-tRNA biosynthesis. Catalyzes the formation of N(7)-methylguanine at position 46 (m7G46) in tRNA. The protein is tRNA (guanine-N(7)-)-methyltransferase of Aeromonas hydrophila subsp. hydrophila (strain ATCC 7966 / DSM 30187 / BCRC 13018 / CCUG 14551 / JCM 1027 / KCTC 2358 / NCIMB 9240 / NCTC 8049).